Consider the following 176-residue polypeptide: Peptide deformylase (176 aa).

Fe cation-binding residues include Cys95 and His137. Residue Glu138 is part of the active site. His141 contacts Fe cation.

It belongs to the polypeptide deformylase family. Fe(2+) is required as a cofactor.

It catalyses the reaction N-terminal N-formyl-L-methionyl-[peptide] + H2O = N-terminal L-methionyl-[peptide] + formate. Removes the formyl group from the N-terminal Met of newly synthesized proteins. Requires at least a dipeptide for an efficient rate of reaction. N-terminal L-methionine is a prerequisite for activity but the enzyme has broad specificity at other positions. In Hyphomonas neptunium (strain ATCC 15444), this protein is Peptide deformylase.